A 432-amino-acid polypeptide reads, in one-letter code: Patatin-like phospholipase domain-containing protein 5 (432 aa).

Residues 12–181 form the PNPLA domain; it reads LSFSGSGYMG…SNNLPFSDCP (170 aa). The GXGXXG motif lies at 16–21; the sequence is GSGYMG. Residues 47–51 carry the GXSXG motif; the sequence is GSSSG. Catalysis depends on Ser-49, which acts as the Nucleophile. Asp-168 acts as the Proton acceptor in catalysis. The short motif at 168–170 is the DGA/G element; it reads DGA. The disordered stretch occupies residues 404-423; it reads ADSGLLRQQRGTAPSGNRPL.

The catalysed reaction is a triacylglycerol + H2O = a diacylglycerol + a fatty acid + H(+). Has abundant triacylglycerol lipase activity. The sequence is that of Patatin-like phospholipase domain-containing protein 5 from Mus musculus (Mouse).